We begin with the raw amino-acid sequence, 623 residues long: Chaperone protein HtpG (623 aa).

The interval 1–336 (MSMKGQETRG…SNDLPLNVSR (336 aa)) is a; substrate-binding. A b region spans residues 337-551 (EILQDSRVTQ…ADEMSTQMAK (215 aa)). A c region spans residues 552–623 (LFAAAGQEAP…IRRMNKLLSA (72 aa)).

This sequence belongs to the heat shock protein 90 family. In terms of assembly, homodimer.

It localises to the cytoplasm. In terms of biological role, molecular chaperone. Has ATPase activity. This chain is Chaperone protein HtpG, found in Serratia proteamaculans (strain 568).